A 158-amino-acid polypeptide reads, in one-letter code: MKKVSIQVCISNKQNDVPIRIQSAKKLVLYCLQHWEVHTDQVYIYFLDDESLAQLHDEVFSDPSLTDTITLPIDSPGTSSQPHILGEAFISPKAAIRFLKDRAEDSDLLYEEISRYVIHSLLHMLGYDDQTPEERKKMRVKENQALCMLREKHALLSD.

Zn(2+) contacts are provided by H119, H123, and D129.

This sequence belongs to the endoribonuclease YbeY family. Requires Zn(2+) as cofactor.

The protein localises to the cytoplasm. Single strand-specific metallo-endoribonuclease involved in late-stage 70S ribosome quality control and in maturation of the 3' terminus of the 16S rRNA. This chain is Endoribonuclease YbeY, found in Chlamydia caviae (strain ATCC VR-813 / DSM 19441 / 03DC25 / GPIC) (Chlamydophila caviae).